We begin with the raw amino-acid sequence, 326 residues long: Protein TMED8 (326 aa).

The interval 1-99 (MSDRQAAEGP…EGQAPGEQAA (99 aa)) is disordered. Residues 50-65 (SSPLASASDPAAESSP) are compositionally biased toward low complexity. In terms of domain architecture, GOLD spans 160 to 324 (PPCVWTFAKV…NKTLYFHIYY (165 aa)). The residue at position 170 (lysine 170) is an N6-acetyllysine. Residues 234–268 (VQVSDSSEDEEEEEDEEEEIEEPVPVGDVERGSRS) form a disordered region. Acidic residues predominate over residues 239 to 255 (SSEDEEEEEDEEEEIEE).

The protein is Protein TMED8 (Tmed8) of Mus musculus (Mouse).